The sequence spans 326 residues: MARNATNKLLHKAKKSKSDEFYTQYCDIENELQYYREHFSDKVVYCNCDDPRVSNFFKYFAVNFDNLGLKKLIASCYVENKEGFSSSEAAKNGFYYEYHKENGKKLVFDDISVSSFCGDGDFRSSESIDLLKKSDIVVTNPPFSLFREYLDQLIKYDKKFLIIANVNSITYKEVFNLIKENKIWLGVHLGRGVSGFIVPEHYELYGTEARIDSNGNRIISPNNCLWLTNLDVFIRHKDLPLTRKYFGNESSYPKYDNYDAINVNKTKDIPLDYNGVMGVPITFLHKFNPEQFELIKFRKGVDEKDLSINGKCPYFRILIKNKRLQK.

It belongs to the N(4)/N(6)-methyltransferase family. As to quaternary structure, monomer.

It carries out the reaction a 2'-deoxyadenosine in DNA + S-adenosyl-L-methionine = an N(6)-methyl-2'-deoxyadenosine in DNA + S-adenosyl-L-homocysteine + H(+). Its function is as follows. A methylase that recognizes the double-stranded sequence 5'-GAATTC-3', methylates A-3 on both strands, and protects the DNA from cleavage by the EcoRI endonuclease. The chain is Type II methyltransferase M.EcoRI (ecoRIM) from Escherichia coli.